Reading from the N-terminus, the 40-residue chain is Photosystem II reaction center protein J (40 aa).

Residues 8 to 28 (IPLWLIGTVTGTLVIGLIGIF) traverse the membrane as a helical segment.

Belongs to the PsbJ family. In terms of assembly, PSII is composed of 1 copy each of membrane proteins PsbA, PsbB, PsbC, PsbD, PsbE, PsbF, PsbH, PsbI, PsbJ, PsbK, PsbL, PsbM, PsbT, PsbX, PsbY, PsbZ, Psb30/Ycf12, at least 3 peripheral proteins of the oxygen-evolving complex and a large number of cofactors. It forms dimeric complexes.

Its subcellular location is the plastid. The protein localises to the chloroplast thylakoid membrane. In terms of biological role, one of the components of the core complex of photosystem II (PSII). PSII is a light-driven water:plastoquinone oxidoreductase that uses light energy to abstract electrons from H(2)O, generating O(2) and a proton gradient subsequently used for ATP formation. It consists of a core antenna complex that captures photons, and an electron transfer chain that converts photonic excitation into a charge separation. This is Photosystem II reaction center protein J from Cycas taitungensis (Prince sago).